The following is a 78-amino-acid chain: Acyl carrier protein (78 aa).

In terms of domain architecture, Carrier spans 2–77 (STIEESVKAI…AAIDFIQASQ (76 aa)). The residue at position 37 (S37) is an O-(pantetheine 4'-phosphoryl)serine.

The protein belongs to the acyl carrier protein (ACP) family. Post-translationally, 4'-phosphopantetheine is transferred from CoA to a specific serine of apo-ACP by AcpS. This modification is essential for activity because fatty acids are bound in thioester linkage to the sulfhydryl of the prosthetic group.

It localises to the cytoplasm. It participates in lipid metabolism; fatty acid biosynthesis. Its function is as follows. Carrier of the growing fatty acid chain in fatty acid biosynthesis. This chain is Acyl carrier protein, found in Sodalis glossinidius (strain morsitans).